The primary structure comprises 155 residues: Leader peptidase HopD (155 aa).

Belongs to the peptidase A24 family.

In Escherichia coli, this protein is Leader peptidase HopD (hopD).